The sequence spans 398 residues: Fe-regulated protein 8 (398 aa).

In terms of biological role, protein of unknown function; part of the gene cluster that mediates the biosynthesis of siderophore ferrichrome A which is contributing to organismal virulence. The protein is Fe-regulated protein 8 of Mycosarcoma maydis (Corn smut fungus).